A 323-amino-acid polypeptide reads, in one-letter code: Lipid A biosynthesis myristoyltransferase (323 aa).

A helical membrane pass occupies residues 23–43 (YWGAWLGVAAMAGIALTPPKF). The HXXXXD motif signature appears at 139–144 (HGWAVD).

Belongs to the LpxL/LpxM/LpxP family. LpxM subfamily.

The protein localises to the cell inner membrane. The enzyme catalyses alpha-Kdo-(2-&gt;4)-alpha-Kdo-(2-&gt;6)-(dodecanoyl)-lipid IVA (E. coli) + tetradecanoyl-[ACP] = alpha-Kdo-(2-&gt;4)-alpha-Kdo-(2-&gt;6)-lipid A (E. coli) + holo-[ACP]. It catalyses the reaction (9Z)-hexadecenoyl-(Kdo)2-lipid IVA (E. coli) + tetradecanoyl-[ACP] = ((9Z)-hexadecenoyl-tetradecanoyl)-(Kdo)2-lipid A + holo-[ACP]. Its pathway is glycolipid biosynthesis; KDO(2)-lipid A biosynthesis; KDO(2)-lipid A from CMP-3-deoxy-D-manno-octulosonate and lipid IV(A): step 4/4. It participates in bacterial outer membrane biogenesis; lipopolysaccharide biosynthesis. In terms of biological role, catalyzes the transfer of myristate from myristoyl-[acyl-carrier-protein] (ACP) to Kdo(2)-(lauroyl)-lipid IV(A) to form Kdo(2)-lipid A. Can probably also catalyze the transfer of myristate to Kdo(2)-(palmitoleoyl)-lipid IV(A) to form the cold-adapted Kdo(2)-lipid A. In vitro, can acylate Kdo(2)-lipid IV(A), but acylation of (KDO)2-(lauroyl)-lipid IV(A) is about 100 times faster. In vitro, can use lauroyl-ACP but displays a slight kinetic preference for myristoyl-ACP. In Escherichia coli (strain K12), this protein is Lipid A biosynthesis myristoyltransferase.